The sequence spans 366 residues: RISC-loading complex subunit TARBP2 (366 aa).

Sufficient for interaction with PRKRA stretches follow at residues 22 to 105 (MLAA…EPAL), 152 to 234 (SPQQ…DARD), and 287 to 366 (LGAL…AGSK). The region spanning 30–97 (TPISLLQEYG…AEVALKHLKG (68 aa)) is the DRBM 1 domain. The tract at residues 135 to 158 (PSAVPTRSSPMEVQPPVSPQQSEC) is disordered. S152 bears the Phosphoserine mark. 2 consecutive DRBM domains span residues 159–227 (NPVG…RVHT) and 293–361 (ACCS…YLKI). A sufficient for interaction with DICER1 region spans residues 228–366 (VPLDARDGNE…QYLKIMAGSK (139 aa)).

It belongs to the TARBP2 family. Self-associates. Component of the RISC loading complex (RLC), or micro-RNA (miRNA) loading complex (miRLC), which is composed of DICER1, AGO2 and TARBP2. Note that the trimeric RLC/miRLC is also referred to as RISC. Interacts with EIF2AK2/PKR and inhibits its protein kinase activity. Interacts with DHX9 and PRKRA. Interacts with DICER1, AGO2, MOV10, EIF6 and RPL7A (60S ribosome subunit); they form a large RNA-induced silencing complex (RISC). Interacts with IRF7; this interaction prevents IRF7 phosphorylation and activation.

It is found in the cytoplasm. Its subcellular location is the perinuclear region. The protein resides in the nucleus. Required for formation of the RNA induced silencing complex (RISC). Component of the RISC loading complex (RLC), also known as the micro-RNA (miRNA) loading complex (miRLC), which is composed of DICER1, AGO2 and TARBP2. Within the RLC/miRLC, DICER1 and TARBP2 are required to process precursor miRNAs (pre-miRNAs) to mature miRNAs and then load them onto AGO2. AGO2 bound to the mature miRNA constitutes the minimal RISC and may subsequently dissociate from DICER1 and TARBP2. May also play a role in the production of short interfering RNAs (siRNAs) from double-stranded RNA (dsRNA) by DICER1. Binds in vitro to the PRM1 3'-UTR. Seems to act as a repressor of translation. For some pre-miRNA substrates, may also alter the choice of cleavage site by DICER1. Negatively regulates IRF7-mediated IFN-beta signaling triggered by viral infection by inhibiting the phosphorylation of IRF7 and promoting its 'Lys'-48-linked ubiquitination and degradation. This chain is RISC-loading complex subunit TARBP2, found in Bos taurus (Bovine).